A 2250-amino-acid polypeptide reads, in one-letter code: RNA1 polyprotein (2250 aa).

Positions 346–371 (SPTVTPSSTPSTSRSSSPEPRVSSPS) are enriched in low complexity. Residues 346 to 372 (SPTVTPSSTPSTSRSSSPEPRVSSPSG) form a disordered region. Positions 849 to 1020 (LRDAHNALSR…PHFHEFNLLA (172 aa)) constitute an SF3 helicase domain. The helical transmembrane segment at 1225–1245 (VALCAVLLVGYLIIKFAIFLF) threads the bilayer. The residue at position 1299 (S1299) is an O-(5'-phospho-RNA)-serine. Residues 1319-1532 (GPEEEPSQSL…YAQIVTLDDF (214 aa)) enclose the Peptidase C3 domain. Active-site for picornain 3C-like protease activity residues include H1362, D1400, and C1495. One can recognise a RdRp catalytic domain in the interval 1814–1956 (TNWFNGDYSR…SVNDVITEKF (143 aa)).

This sequence belongs to the comoviridae genome polyprotein B family. In terms of processing, specific enzymatic cleavages by picornain 3C-like protease in vivo yield mature proteins. Picornain 3C-like protease is autocatalytically processed. Post-translationally, viral genome-linked protein (VPg) is uridylylated by the polymerase and is covalently linked to the 5'-end of genomic RNA. This uridylylated form acts as a nucleotide-peptide primer for the polymerase.

It localises to the host membrane. The catalysed reaction is RNA(n) + a ribonucleoside 5'-triphosphate = RNA(n+1) + diphosphate. Picornain 3C-like protease is a thiol protease that probably cleaves the B and M polyproteins. Its function is as follows. Viral genome-linked protein (VPg) plays a role in RNA replication. This is RNA1 polyprotein from Balsamorhiza sagittata (Apple).